The following is an 845-amino-acid chain: Protein translocase subunit SecA (845 aa).

Residues Q85, 103–107 (GEGKT), and D492 contribute to the ATP site. Positions 787 to 845 (REQVAQGQAEHPETEQDAAAQSNTSAKRQPVRVDKKVGRNDLCPCGSGKKFKNCHGRNA) are disordered. Residues C829, C831, C840, and H841 each contribute to the Zn(2+) site. The segment covering 835 to 845 (KKFKNCHGRNA) has biased composition (basic residues).

Belongs to the SecA family. Monomer and homodimer. Part of the essential Sec protein translocation apparatus which comprises SecA, SecYEG and auxiliary proteins SecDF. Other proteins may also be involved. The cofactor is Zn(2+).

The protein resides in the cell membrane. It is found in the cytoplasm. The catalysed reaction is ATP + H2O + cellular proteinSide 1 = ADP + phosphate + cellular proteinSide 2.. Functionally, part of the Sec protein translocase complex. Interacts with the SecYEG preprotein conducting channel. Has a central role in coupling the hydrolysis of ATP to the transfer of proteins into and across the cell membrane, serving as an ATP-driven molecular motor driving the stepwise translocation of polypeptide chains across the membrane. The sequence is that of Protein translocase subunit SecA from Enterococcus faecalis (strain ATCC 700802 / V583).